Here is a 413-residue protein sequence, read N- to C-terminus: Glucose-1-phosphate adenylyltransferase (413 aa).

Alpha-D-glucose 1-phosphate contacts are provided by residues glycine 161, 176 to 177 (EK), and serine 195.

Belongs to the bacterial/plant glucose-1-phosphate adenylyltransferase family. In terms of assembly, homotetramer.

The catalysed reaction is alpha-D-glucose 1-phosphate + ATP + H(+) = ADP-alpha-D-glucose + diphosphate. Its pathway is glycan biosynthesis; glycogen biosynthesis. Functionally, involved in the biosynthesis of ADP-glucose, a building block required for the elongation reactions to produce glycogen. Catalyzes the reaction between ATP and alpha-D-glucose 1-phosphate (G1P) to produce pyrophosphate and ADP-Glc. The sequence is that of Glucose-1-phosphate adenylyltransferase from Anaeromyxobacter dehalogenans (strain 2CP-C).